Consider the following 169-residue polypeptide: Regulator of G-protein signaling rgs-2 (169 aa).

An RGS domain is found at 39–158 (GWSQSFENLM…FLASNIYKTV (120 aa)).

In terms of processing, may be phosphorylated and activated by egl-4. Expressed in a subset of neurons including ventral cord and head- and tail-ganglia neurons. Also expressed in non-neuronal cells including pharyngeal and uterine muscles.

Weakly inhibits G protein signaling in nervous system, interacting preferentially with the G(O) subfamily member goa-1. In vitro, it acts as a GTPase activator of goa-1. Rgs-1 and rgs-2 redundantly adjust signaling when worms are fed to allow rapid induction of egg-laying behavior. Modulates chemotaxis responses by regulating negatively the sensitivity to quinine in ASH sensory neurons. This Caenorhabditis elegans protein is Regulator of G-protein signaling rgs-2 (rgs-2).